The following is a 119-amino-acid chain: uncharacterized protein (119 aa).

This is an uncharacterized protein from Escherichia coli O157:H7.